Consider the following 337-residue polypeptide: Anthranilate phosphoribosyltransferase (337 aa).

Residues G81, 84–85 (GD), S89, 91–94 (NVST), 109–117 (KHGNRALSS), and A121 each bind 5-phospho-alpha-D-ribose 1-diphosphate. Residue G81 participates in anthranilate binding. Residue S93 participates in Mg(2+) binding. N112 is a binding site for anthranilate. R167 contributes to the anthranilate binding site. Mg(2+) contacts are provided by D226 and E227.

It belongs to the anthranilate phosphoribosyltransferase family. In terms of assembly, homodimer. The cofactor is Mg(2+).

The enzyme catalyses N-(5-phospho-beta-D-ribosyl)anthranilate + diphosphate = 5-phospho-alpha-D-ribose 1-diphosphate + anthranilate. The protein operates within amino-acid biosynthesis; L-tryptophan biosynthesis; L-tryptophan from chorismate: step 2/5. Functionally, catalyzes the transfer of the phosphoribosyl group of 5-phosphorylribose-1-pyrophosphate (PRPP) to anthranilate to yield N-(5'-phosphoribosyl)-anthranilate (PRA). This chain is Anthranilate phosphoribosyltransferase, found in Bradyrhizobium sp. (strain ORS 278).